A 271-amino-acid chain; its full sequence is NAD kinase (271 aa).

Asp52 functions as the Proton acceptor in the catalytic mechanism. NAD(+)-binding positions include 52-53 (DG), 129-130 (NE), Arg155, Asp157, and Ala192.

Belongs to the NAD kinase family. Requires a divalent metal cation as cofactor.

It localises to the cytoplasm. It carries out the reaction NAD(+) + ATP = ADP + NADP(+) + H(+). In terms of biological role, involved in the regulation of the intracellular balance of NAD and NADP, and is a key enzyme in the biosynthesis of NADP. Catalyzes specifically the phosphorylation on 2'-hydroxyl of the adenosine moiety of NAD to yield NADP. The polypeptide is NAD kinase (Geobacillus stearothermophilus (Bacillus stearothermophilus)).